The following is a 131-amino-acid chain: UPF0102 protein YraN (131 aa).

Residues 1–19 are compositionally biased toward polar residues; sequence MATVPTRSGSPRQLTTKQT. A disordered region spans residues 1-20; sequence MATVPTRSGSPRQLTTKQTG.

The protein belongs to the UPF0102 family.

This chain is UPF0102 protein YraN, found in Shigella boydii serotype 18 (strain CDC 3083-94 / BS512).